The sequence spans 286 residues: ATP synthase gamma chain (286 aa).

This sequence belongs to the ATPase gamma chain family. As to quaternary structure, F-type ATPases have 2 components, CF(1) - the catalytic core - and CF(0) - the membrane proton channel. CF(1) has five subunits: alpha(3), beta(3), gamma(1), delta(1), epsilon(1). CF(0) has three main subunits: a, b and c.

The protein resides in the cell inner membrane. Functionally, produces ATP from ADP in the presence of a proton gradient across the membrane. The gamma chain is believed to be important in regulating ATPase activity and the flow of protons through the CF(0) complex. The polypeptide is ATP synthase gamma chain (Pseudomonas savastanoi pv. phaseolicola (strain 1448A / Race 6) (Pseudomonas syringae pv. phaseolicola (strain 1448A / Race 6))).